The primary structure comprises 404 residues: Tryptophan synthase beta chain (404 aa).

An N6-(pyridoxal phosphate)lysine modification is found at Lys99.

It belongs to the TrpB family. As to quaternary structure, tetramer of two alpha and two beta chains. The cofactor is pyridoxal 5'-phosphate.

It carries out the reaction (1S,2R)-1-C-(indol-3-yl)glycerol 3-phosphate + L-serine = D-glyceraldehyde 3-phosphate + L-tryptophan + H2O. The protein operates within amino-acid biosynthesis; L-tryptophan biosynthesis; L-tryptophan from chorismate: step 5/5. Functionally, the beta subunit is responsible for the synthesis of L-tryptophan from indole and L-serine. This Rhizobium rhizogenes (strain K84 / ATCC BAA-868) (Agrobacterium radiobacter) protein is Tryptophan synthase beta chain.